A 193-amino-acid polypeptide reads, in one-letter code: Fibrillarin-like rRNA/tRNA 2'-O-methyltransferase (193 aa).

S-adenosyl-L-methionine is bound by residues 82–83 (TT), 100–101 (EF), 125–126 (DA), and 145–148 (DVAQ).

It belongs to the methyltransferase superfamily. Fibrillarin family. Interacts with nop5. Component of box C/D small ribonucleoprotein (sRNP) particles that contain rpl7ae, FlpA and nop5, plus a guide RNA.

Functionally, involved in pre-rRNA and tRNA processing. Utilizes the methyl donor S-adenosyl-L-methionine to catalyze the site-specific 2'-hydroxyl methylation of ribose moieties in rRNA and tRNA. Site specificity is provided by a guide RNA that base pairs with the substrate. Methylation occurs at a characteristic distance from the sequence involved in base pairing with the guide RNA. This Methanosarcina mazei (Methanosarcina frisia) protein is Fibrillarin-like rRNA/tRNA 2'-O-methyltransferase.